A 176-amino-acid polypeptide reads, in one-letter code: Large ribosomal subunit protein bL17m (176 aa).

The N-terminal 8 residues, 1–8 (MRLSLAAA), are a transit peptide targeting the mitochondrion.

The protein belongs to the bacterial ribosomal protein bL17 family. As to quaternary structure, component of the mitochondrial ribosome large subunit (39S) which comprises a 16S rRNA and about 50 distinct proteins.

It localises to the mitochondrion. The sequence is that of Large ribosomal subunit protein bL17m (Mrpl17) from Rattus norvegicus (Rat).